Consider the following 474-residue polypeptide: MSALDVIIMAAGKGTRMKSRIPKVLQRLAGRPLLGHVLDQARGLQARRAVVVTGHGAAEVEPFIARAADGLDVRCVRQEPQLGTGHAVQQAVPALQGDGTVIVLSGDVPLTRTDTLRALVAAGGGGQLALLTVTLPDPAGYGRIVRGSDGAVRGIVEHKDATEAQRAIDEVYSGIMAVPAGLLAGWLARLTNDNAQGEYYLTDIVAMAVADGVPVVAHRIADALQVAGVNSPLQLAELERAHQLAQARALMEQGVRLADPARFDLRDDARTGVRGELACGQDVEIDVNCIFSGRVELGEGVRIGAHCCIANARIAAGAVVHPYTHIDGEQPAGVQVGEGALVGPFARLRPGAQLGREVHIGNFVEVKNSSLAEGAKANHLAYLGDATVGERVNYGAGSITANYDGANKHRTVIEADVHVGSNCVLVAPVTIGAGGTVGGGSTITKSTPAGALSVARGKQVTKENWQRPAKLPKA.

A pyrophosphorylase region spans residues 1-232; that stretch reads MSALDVIIMA…ALQVAGVNSP (232 aa). UDP-N-acetyl-alpha-D-glucosamine-binding positions include Lys-23, Gln-78, 83–84, 105–107, Gly-142, Glu-157, and Asn-230; these read GT and SGD. Residue Asp-107 participates in Mg(2+) binding. Asn-230 is a binding site for Mg(2+). The tract at residues 233-253 is linker; it reads LQLAELERAHQLAQARALMEQ. Residues 254-474 form an N-acetyltransferase region; that stretch reads GVRLADPARF…WQRPAKLPKA (221 aa). Residues Arg-349 and Lys-367 each coordinate UDP-N-acetyl-alpha-D-glucosamine. His-379 functions as the Proton acceptor in the catalytic mechanism. UDP-N-acetyl-alpha-D-glucosamine is bound by residues Tyr-382 and Asn-393. Acetyl-CoA-binding positions include Ala-396, 402–403, Ser-421, Gly-439, and Arg-456; that span reads NY. The disordered stretch occupies residues 454 to 474; sequence VARGKQVTKENWQRPAKLPKA.

It in the N-terminal section; belongs to the N-acetylglucosamine-1-phosphate uridyltransferase family. In the C-terminal section; belongs to the transferase hexapeptide repeat family. In terms of assembly, homotrimer. Requires Mg(2+) as cofactor.

Its subcellular location is the cytoplasm. The catalysed reaction is alpha-D-glucosamine 1-phosphate + acetyl-CoA = N-acetyl-alpha-D-glucosamine 1-phosphate + CoA + H(+). The enzyme catalyses N-acetyl-alpha-D-glucosamine 1-phosphate + UTP + H(+) = UDP-N-acetyl-alpha-D-glucosamine + diphosphate. The protein operates within nucleotide-sugar biosynthesis; UDP-N-acetyl-alpha-D-glucosamine biosynthesis; N-acetyl-alpha-D-glucosamine 1-phosphate from alpha-D-glucosamine 6-phosphate (route II): step 2/2. It functions in the pathway nucleotide-sugar biosynthesis; UDP-N-acetyl-alpha-D-glucosamine biosynthesis; UDP-N-acetyl-alpha-D-glucosamine from N-acetyl-alpha-D-glucosamine 1-phosphate: step 1/1. It participates in bacterial outer membrane biogenesis; LPS lipid A biosynthesis. In terms of biological role, catalyzes the last two sequential reactions in the de novo biosynthetic pathway for UDP-N-acetylglucosamine (UDP-GlcNAc). The C-terminal domain catalyzes the transfer of acetyl group from acetyl coenzyme A to glucosamine-1-phosphate (GlcN-1-P) to produce N-acetylglucosamine-1-phosphate (GlcNAc-1-P), which is converted into UDP-GlcNAc by the transfer of uridine 5-monophosphate (from uridine 5-triphosphate), a reaction catalyzed by the N-terminal domain. This Paracidovorax citrulli (strain AAC00-1) (Acidovorax citrulli) protein is Bifunctional protein GlmU.